An 875-amino-acid polypeptide reads, in one-letter code: Translation initiation factor IF-2 (875 aa).

Disordered regions lie at residues Met-1–Ala-20, Leu-47–Ala-102, and Glu-126–Gly-246. The span at Ala-54–Pro-66 shows a compositional bias: low complexity. Residues Ala-67–Ser-85 show a composition bias toward pro residues. Composition is skewed to basic and acidic residues over residues Arg-88–Ala-102 and Glu-126–Ala-140. Low complexity-rich tracts occupy residues Glu-141–Pro-195 and Pro-202–Pro-221. Residues Lys-223 to Gly-246 are compositionally biased toward basic and acidic residues. Positions Ala-374–Lys-544 constitute a tr-type G domain. Residues Gly-383–Thr-390 are G1. Gly-383–Thr-390 serves as a coordination point for GTP. Positions Gly-408 to His-412 are G2. The G3 stretch occupies residues Asp-430 to Gly-433. GTP-binding positions include Asp-430–His-434 and Thr-484–Asp-487. A G4 region spans residues Thr-484–Asp-487. Positions Ser-520–Lys-522 are G5.

The protein belongs to the TRAFAC class translation factor GTPase superfamily. Classic translation factor GTPase family. IF-2 subfamily.

Its subcellular location is the cytoplasm. One of the essential components for the initiation of protein synthesis. Protects formylmethionyl-tRNA from spontaneous hydrolysis and promotes its binding to the 30S ribosomal subunits. Also involved in the hydrolysis of GTP during the formation of the 70S ribosomal complex. This Novosphingobium aromaticivorans (strain ATCC 700278 / DSM 12444 / CCUG 56034 / CIP 105152 / NBRC 16084 / F199) protein is Translation initiation factor IF-2.